A 260-amino-acid chain; its full sequence is Hydroxypyruvate/pyruvate aldolase Bphyt_0320 (260 aa).

Residue His-48 is the Proton acceptor of the active site. Residues Glu-157 and Asp-183 each contribute to the a divalent metal cation site.

Belongs to the HpcH/HpaI aldolase family. Requires Mn(2+) as cofactor. The cofactor is Mg(2+). Co(2+) serves as cofactor.

It catalyses the reaction D-glyceraldehyde + 3-hydroxypyruvate = 2-dehydro-D-gluconate. The catalysed reaction is D-glyceraldehyde + pyruvate = 2-dehydro-3-deoxy-L-galactonate. It carries out the reaction 2-dehydro-3-deoxy-D-gluconate = D-glyceraldehyde + pyruvate. Its function is as follows. Aldolase which can catalyze in vitro the aldolisation reaction between hydroxypyruvate (HPA) or pyruvate (PA) and D-glyceraldehyde (D-GA). The condensation of hydroxypyruvate and D-glyceraldehyde produces 2-dehydro-D-gluconate. The condensation of pyruvate and D-glyceraldehyde produces 2-dehydro-3-deoxy-L-galactonate as the major product and 2-dehydro-3-deoxy-D-gluconate. Also catalyzes the retro-aldol type decarboxylation of oxaloacetate, a general property of known pyruvate aldolases. This is Hydroxypyruvate/pyruvate aldolase Bphyt_0320 from Paraburkholderia phytofirmans (strain DSM 17436 / LMG 22146 / PsJN) (Burkholderia phytofirmans).